The sequence spans 422 residues: Glutamate-1-semialdehyde 2,1-aminomutase (422 aa).

The residue at position 264 (lysine 264) is an N6-(pyridoxal phosphate)lysine.

It belongs to the class-III pyridoxal-phosphate-dependent aminotransferase family. HemL subfamily. Homodimer. Requires pyridoxal 5'-phosphate as cofactor.

It is found in the cytoplasm. It carries out the reaction (S)-4-amino-5-oxopentanoate = 5-aminolevulinate. Its pathway is porphyrin-containing compound metabolism; protoporphyrin-IX biosynthesis; 5-aminolevulinate from L-glutamyl-tRNA(Glu): step 2/2. The sequence is that of Glutamate-1-semialdehyde 2,1-aminomutase from Clostridium acetobutylicum (strain ATCC 824 / DSM 792 / JCM 1419 / IAM 19013 / LMG 5710 / NBRC 13948 / NRRL B-527 / VKM B-1787 / 2291 / W).